Consider the following 567-residue polypeptide: Cytochrome P450 monooxygenase 231 (567 aa).

Residues 3 to 23 traverse the membrane as a helical segment; the sequence is VSTNELAILAIVLLATGVLFY. 2 N-linked (GlcNAc...) asparagine glycosylation sites follow: asparagine 81 and asparagine 223. Cysteine 475 provides a ligand contact to heme.

This sequence belongs to the cytochrome P450 family. Heme is required as a cofactor.

Its subcellular location is the membrane. It participates in secondary metabolite biosynthesis. Functionally, cytochrome P450 monooxygenase that is able to use anthracene, carbazole, pyrene, and phenanthrene as substrates for oxidation. These multifunctional properties against a series of polycyclic aromatic hydrocarbons (PAHs) suggest that CYP231 would play important roles, at least in part, in fungal metabolic systems involved in xenobiotic detoxification. The chain is Cytochrome P450 monooxygenase 231 from Postia placenta (strain ATCC 44394 / Madison 698-R) (Brown rot fungus).